The sequence spans 138 residues: Large ribosomal subunit protein bL12c (138 aa).

The protein belongs to the bacterial ribosomal protein bL12 family. As to quaternary structure, homodimer. Part of the ribosomal stalk of the 50S ribosomal subunit. Forms a multimeric L10(L12)X complex, where L10 forms an elongated spine to which 2 to 4 L12 dimers bind in a sequential fashion. Binds GTP-bound translation factors.

It is found in the plastid. In terms of biological role, forms part of the ribosomal stalk which helps the ribosome interact with GTP-bound translation factors. Is thus essential for accurate translation. This chain is Large ribosomal subunit protein bL12c, found in Euglena longa (Euglenophycean alga).